We begin with the raw amino-acid sequence, 465 residues long: Kynureninase (465 aa).

Pyridoxal 5'-phosphate-binding positions include Leu116, Thr117, 144-147 (FPSD), Asp231, His234, and Tyr256. Lys257 is modified (N6-(pyridoxal phosphate)lysine). 2 residues coordinate pyridoxal 5'-phosphate: Trp291 and Asn319.

It belongs to the kynureninase family. As to quaternary structure, homodimer. Pyridoxal 5'-phosphate serves as cofactor.

The protein localises to the cytoplasm. The catalysed reaction is L-kynurenine + H2O = anthranilate + L-alanine + H(+). The enzyme catalyses 3-hydroxy-L-kynurenine + H2O = 3-hydroxyanthranilate + L-alanine + H(+). The protein operates within amino-acid degradation; L-kynurenine degradation; L-alanine and anthranilate from L-kynurenine: step 1/1. Its pathway is cofactor biosynthesis; NAD(+) biosynthesis; quinolinate from L-kynurenine: step 2/3. In terms of biological role, catalyzes the cleavage of L-kynurenine (L-Kyn) and L-3-hydroxykynurenine (L-3OHKyn) into anthranilic acid (AA) and 3-hydroxyanthranilic acid (3-OHAA), respectively. This Scheffersomyces stipitis (strain ATCC 58785 / CBS 6054 / NBRC 10063 / NRRL Y-11545) (Yeast) protein is Kynureninase.